The following is a 540-amino-acid chain: Exopolysaccharide phosphotransferase SCO6022 (540 aa).

This sequence belongs to the stealth family.

In Streptomyces coelicolor (strain ATCC BAA-471 / A3(2) / M145), this protein is Exopolysaccharide phosphotransferase SCO6022.